The following is a 94-amino-acid chain: ESAT-6-like protein EsxN (94 aa).

It belongs to the WXG100 family. ESAT-6 subfamily.

It localises to the secreted. In Mycobacterium bovis (strain ATCC BAA-935 / AF2122/97), this protein is ESAT-6-like protein EsxN.